We begin with the raw amino-acid sequence, 283 residues long: MATGGLAIIQSMKHKLPPSERKLADYILAHPHKAIESTVNEISALANSSDAAVIRLCKSLGLKGFQDLKMRVAGDLAKPTFQGYRDIVPHEPLPSISEKTAGNAIQAIQDTSDLMDYKELERAVSLLLKAHTVHFIGLGASGIVAKDAQQKWLRIHKQATAFTDTHLVASLIANADKDDIVFAISFSGETQEIVELFAMAKEKGITTISLTQFSQTSVSALADVPLYTAHSNEALIRSAATSSRLAQLFIIDVLFLGMAAEQYETTTGYIDKTRAAIQSMRIK.

The HTH rpiR-type domain maps to 3-79 (TGGLAIIQSM…MRVAGDLAKP (77 aa)). The segment at residues 39–58 (VNEISALANSSDAAVIRLCK) is a DNA-binding region (H-T-H motif). The region spanning 123-264 (AVSLLLKAHT…FLGMAAEQYE (142 aa)) is the SIS domain.

This is an uncharacterized protein from Bacillus subtilis (strain 168).